Consider the following 295-residue polypeptide: Protoheme IX farnesyltransferase (295 aa).

9 consecutive transmembrane segments (helical) span residues 8-28 (ITKP…FFLA), 35-55 (GGLF…GCVF), 83-103 (GVTL…LWFG), 107-127 (LATA…SLYL), 132-152 (IYGT…GYCA), 162-182 (LTLL…IAIF), 208-228 (IFWY…GGYA), 229-249 (GYGY…MALR), and 263-283 (VFIF…IDFQ).

This sequence belongs to the UbiA prenyltransferase family. Protoheme IX farnesyltransferase subfamily.

The protein localises to the cell inner membrane. The catalysed reaction is heme b + (2E,6E)-farnesyl diphosphate + H2O = Fe(II)-heme o + diphosphate. It participates in porphyrin-containing compound metabolism; heme O biosynthesis; heme O from protoheme: step 1/1. Its function is as follows. Converts heme B (protoheme IX) to heme O by substitution of the vinyl group on carbon 2 of heme B porphyrin ring with a hydroxyethyl farnesyl side group. The protein is Protoheme IX farnesyltransferase of Chromohalobacter salexigens (strain ATCC BAA-138 / DSM 3043 / CIP 106854 / NCIMB 13768 / 1H11).